The primary structure comprises 434 residues: Solute carrier RCH1 (434 aa).

Over 1-15 (MKTQYSLIRKIWAHS) the chain is Cytoplasmic. Residues 16 to 36 (VTEFLKSQWFFICLAILIVIA) traverse the membrane as a helical segment. Residues 37–50 (RFAPNFARDGGLIK) lie on the Extracellular side of the membrane. The chain crosses the membrane as a helical span at residues 51–71 (GQYSIGYGCVAWIFLQSGLGM). The Cytoplasmic portion of the chain corresponds to 72 to 87 (KSRSLMANMLNWRAHA). The chain crosses the membrane as a helical span at residues 88–108 (TILVLSFLITSSIVYGFCCAV). Over 109–118 (KAANDPKIDD) the chain is Extracellular. Residues 119 to 139 (WVLIGLILTATCPTTVASNVI) traverse the membrane as a helical segment. At 140 to 149 (MTTNAGGNSL) the chain is on the cytoplasmic side. A helical membrane pass occupies residues 150–170 (LCVCEVFIGNLLGAFITPALV). Residues 171–199 (QMFTNRAPFAYGNPATGNGIGALYGRVMK) are Extracellular-facing. The chain crosses the membrane as a helical span at residues 200-220 (QVGLSVFVPLFVGQVIQNCFP). Residues 221 to 234 (KGTAYYLGFLKKYH) lie on the Cytoplasmic side of the membrane. A helical membrane pass occupies residues 235 to 255 (IKIGSYMLLLIMFSSFSTAFY). At 256 to 264 (QDAFTSVSH) the chain is on the extracellular side. A helical membrane pass occupies residues 265 to 285 (VCIIFLCFFNLGIYIFFTGLS). The Cytoplasmic segment spans residues 286–327 (YLCARPWFILKLFPHEPIEGKSTRLYRYSYNIFRPFYYSKED). A helical transmembrane segment spans residues 328 to 348 (AICIMFCGPAKTAALGVSLIT). At 349–362 (SQYGDKKEHLGKLL) the chain is on the extracellular side. Residues 363–383 (VPLVLYQVEQVMTANFFVSLF) form a helical membrane-spanning segment. Topologically, residues 384–434 (KRWIQKDAQADGSESSCANENEEVDLEKIISIGTGENQSVLSNNVPYTQPR) are cytoplasmic. Ser-425 is subject to Phosphoserine.

It belongs to the bile acid:sodium symporter (BASS) (TC 2.A.28) family.

The protein resides in the cell membrane. It is found in the bud neck. Solute carrier protein that negatively regulates the cytosolic calcium homeostasis in response to high levels of extracellular calcium. This is Solute carrier RCH1 from Saccharomyces cerevisiae (strain ATCC 204508 / S288c) (Baker's yeast).